A 200-amino-acid polypeptide reads, in one-letter code: Proteasome subunit beta 2 (200 aa).

A propeptide (removed in mature form; by autocatalysis) is located at residue M1. T2 functions as the Nucleophile in the catalytic mechanism.

The protein belongs to the peptidase T1B family. As to quaternary structure, the 20S proteasome core is composed of 14 alpha and 14 beta subunits that assemble into four stacked heptameric rings, resulting in a barrel-shaped structure. The two inner rings, each composed of seven catalytic beta subunits, are sandwiched by two outer rings, each composed of seven alpha subunits. The catalytic chamber with the active sites is on the inside of the barrel. Has a gated structure, the ends of the cylinder being occluded by the N-termini of the alpha-subunits. Is capped at one or both ends by the proteasome regulatory ATPase, PAN.

Its subcellular location is the cytoplasm. The enzyme catalyses Cleavage of peptide bonds with very broad specificity.. With respect to regulation, the formation of the proteasomal ATPase PAN-20S proteasome complex, via the docking of the C-termini of PAN into the intersubunit pockets in the alpha-rings, triggers opening of the gate for substrate entry. Interconversion between the open-gate and close-gate conformations leads to a dynamic regulation of the 20S proteasome proteolysis activity. Functionally, component of the proteasome core, a large protease complex with broad specificity involved in protein degradation. The sequence is that of Proteasome subunit beta 2 from Pyrobaculum islandicum (strain DSM 4184 / JCM 9189 / GEO3).